Consider the following 461-residue polypeptide: Thyroid hormone receptor beta (461 aa).

The interval 1 to 24 (MTPNSMTENRLPAWDKQKPHPDRG) is disordered. The segment at 1–106 (MTPNSMTENR…IPSYLDKDEL (106 aa)) is modulating. A compositionally biased stretch (basic and acidic residues) spans 13-24 (AWDKQKPHPDRG). 8 residues coordinate Zn(2+): Cys-107, Cys-110, Cys-124, Cys-127, Cys-145, Cys-151, Cys-161, and Cys-164. NR C4-type zinc fingers lie at residues 107-127 (CVVC…CEGC) and 145-169 (CKYE…FKKC). The nuclear receptor DNA-binding region spans 107 to 181 (CVVCGDKATG…VGMATDLVLD (75 aa)). Residues 217 to 461 (EEWELIKTVT…PPLFLEVFED (245 aa)) form the NR LBD domain. The interaction with NR2F6 stretch occupies residues 244–461 (KFLPEDIGQA…PPLFLEVFED (218 aa)). 3,3',5-triiodo-L-thyronine contacts are provided by Arg-282, Asn-331, and His-435. L-thyroxine-binding residues include Arg-282, Asn-331, and His-435.

The protein belongs to the nuclear hormone receptor family. NR1 subfamily. Binds DNA as a dimer; homodimer and heterodimer with RXRA. Interacts with the coactivators NCOA1/SRC1, NCOA2/GRIP1, NCOA7 and MED1/TRAP220 in a ligand-inducible manner. Interacts with the corepressor NCOR1 in absence of ligand. Interacts with C1D. Interacts with NR2F6; the interaction impairs the binding of the THRB homodimer and THRB:RXRB heterodimer to T3 response elements. Interacts with PRMT2 and THRSP. Interacts with TACC1; this interaction is decreased in the presence of thyroid hormone T3.

The protein localises to the nucleus. Functionally, nuclear hormone receptor that can act as a repressor or activator of transcription. High affinity receptor for thyroid hormones, including triiodothyronine and thyroxine. This Rattus norvegicus (Rat) protein is Thyroid hormone receptor beta (Thrb).